Reading from the N-terminus, the 222-residue chain is uncharacterized protein (222 aa).

This is an uncharacterized protein from Archaeoglobus fulgidus (strain ATCC 49558 / DSM 4304 / JCM 9628 / NBRC 100126 / VC-16).